The sequence spans 43 residues: Metallothionein A (43 aa).

The interval 1 to 16 is beta; that stretch reads SCAGSCKCKNCRCRSC. Cysteine 2, cysteine 6, cysteine 8, cysteine 11, cysteine 13, cysteine 16, cysteine 20, cysteine 21, cysteine 23, cysteine 24, cysteine 28, cysteine 31, cysteine 35, and cysteine 37 together coordinate a divalent metal cation. Positions 17-43 are alpha; it reads RKSCCSCCPAGCNNCAKGCVCKEPASS.

This sequence belongs to the metallothionein superfamily. Type 1 family.

Metallothioneins have a high content of cysteine residues that bind various heavy metals. This chain is Metallothionein A, found in Colinus virginianus (Northern bobwhite).